Consider the following 274-residue polypeptide: 2,3,4,5-tetrahydropyridine-2,6-dicarboxylate N-succinyltransferase (274 aa).

Substrate-binding residues include arginine 104 and aspartate 141.

It belongs to the transferase hexapeptide repeat family. Homotrimer.

The protein resides in the cytoplasm. It catalyses the reaction (S)-2,3,4,5-tetrahydrodipicolinate + succinyl-CoA + H2O = (S)-2-succinylamino-6-oxoheptanedioate + CoA. It functions in the pathway amino-acid biosynthesis; L-lysine biosynthesis via DAP pathway; LL-2,6-diaminopimelate from (S)-tetrahydrodipicolinate (succinylase route): step 1/3. The chain is 2,3,4,5-tetrahydropyridine-2,6-dicarboxylate N-succinyltransferase from Enterobacter sp. (strain 638).